The primary structure comprises 472 residues: Argininosuccinate lyase (472 aa).

This sequence belongs to the lyase 1 family. Argininosuccinate lyase subfamily.

The protein resides in the cytoplasm. The enzyme catalyses 2-(N(omega)-L-arginino)succinate = fumarate + L-arginine. It functions in the pathway amino-acid biosynthesis; L-arginine biosynthesis; L-arginine from L-ornithine and carbamoyl phosphate: step 3/3. In Synechococcus sp. (strain CC9902), this protein is Argininosuccinate lyase.